The following is a 611-amino-acid chain: Virulence metalloprotease (611 aa).

The first 25 residues, 1–25, serve as a signal peptide directing secretion; sequence MKKVQRQMKWLFLAASISAALPVSA. Positions 26-199 are excised as a propeptide; that stretch reads AKMVQVDDPS…VLQTWEGLNH (174 aa). Zn(2+) is bound at residue His-346. Residue Glu-347 is part of the active site. Zn(2+) contacts are provided by His-350 and Glu-370. The Proton donor role is filled by His-429.

The protein belongs to the peptidase M4 family. Ca(2+) serves as cofactor. The cofactor is Zn(2+). Seems to be more extensively processed.

It is found in the secreted. Extracellular zinc metalloprotease involved in the virulence mechanism of V.anguillarum. The chain is Virulence metalloprotease (empA) from Vibrio anguillarum (Listonella anguillarum).